Consider the following 358-residue polypeptide: NADH-quinone oxidoreductase subunit H (358 aa).

The next 8 membrane-spanning stretches (helical) occupy residues isoleucine 20–isoleucine 40, alanine 95–isoleucine 115, isoleucine 128–glycine 148, isoleucine 168–methionine 188, valine 206–valine 226, glycine 253–leucine 273, tryptophan 290–tyrosine 310, and valine 334–leucine 354.

The protein belongs to the complex I subunit 1 family. In terms of assembly, NDH-1 is composed of 14 different subunits. Subunits NuoA, H, J, K, L, M, N constitute the membrane sector of the complex.

It is found in the cell inner membrane. It catalyses the reaction a quinone + NADH + 5 H(+)(in) = a quinol + NAD(+) + 4 H(+)(out). Functionally, NDH-1 shuttles electrons from NADH, via FMN and iron-sulfur (Fe-S) centers, to quinones in the respiratory chain. The immediate electron acceptor for the enzyme in this species is believed to be ubiquinone. Couples the redox reaction to proton translocation (for every two electrons transferred, four hydrogen ions are translocated across the cytoplasmic membrane), and thus conserves the redox energy in a proton gradient. This subunit may bind ubiquinone. The protein is NADH-quinone oxidoreductase subunit H of Neisseria meningitidis serogroup C (strain 053442).